The primary structure comprises 45 residues: Photosystem II reaction center protein K (45 aa).

Residues 1-8 (MELMLLFA) constitute a propeptide that is removed on maturation. The chain crosses the membrane as a helical span at residues 24 to 44 (LPVIPVLFLALAFVWQASVGF).

This sequence belongs to the PsbK family. As to quaternary structure, PSII is composed of 1 copy each of membrane proteins PsbA, PsbB, PsbC, PsbD, PsbE, PsbF, PsbH, PsbI, PsbJ, PsbK, PsbL, PsbM, PsbT, PsbX, PsbY, PsbZ, Psb30/Ycf12, peripheral proteins PsbO, CyanoQ (PsbQ), PsbU, PsbV and a large number of cofactors. It forms dimeric complexes.

It is found in the cellular thylakoid membrane. Functionally, one of the components of the core complex of photosystem II (PSII). PSII is a light-driven water:plastoquinone oxidoreductase that uses light energy to abstract electrons from H(2)O, generating O(2) and a proton gradient subsequently used for ATP formation. It consists of a core antenna complex that captures photons, and an electron transfer chain that converts photonic excitation into a charge separation. This Cyanothece sp. (strain PCC 7425 / ATCC 29141) protein is Photosystem II reaction center protein K.